The chain runs to 105 residues: Guanidinium exporter (105 aa).

Met1 is a topological domain (cytoplasmic). A helical membrane pass occupies residues 2 to 19 (SWIVLLIAGLLEVVWAIG). Topologically, residues 20 to 28 (LKYTHGFTR) are periplasmic. Residues 29–48 (LTPSIITIAAMIVSIAMLSW) form a helical membrane-spanning segment. At 49–54 (AMRTLP) the chain is on the cytoplasmic side. Residues 55 to 77 (VGTAYAVWTGIGAVGAAITGILL) traverse the membrane as a helical segment. Over 78-86 (LGESASPAR) the chain is Periplasmic. Residues 87 to 104 (LLSLGLIVAGIIGLKLST) traverse the membrane as a helical segment. Residue His105 is a topological domain, cytoplasmic.

Belongs to the drug/metabolite transporter (DMT) superfamily. Small multidrug resistance (SMR) (TC 2.A.7.1) family. Gdx/SugE subfamily.

The protein localises to the cell inner membrane. In terms of biological role, guanidinium ion exporter. Couples guanidinium export to the proton motive force, exchanging one guanidinium ion for two protons. The protein is Guanidinium exporter of Citrobacter freundii.